A 500-amino-acid polypeptide reads, in one-letter code: Kynurenine 3-monooxygenase (500 aa).

This sequence belongs to the aromatic-ring hydroxylase family. KMO subfamily. It depends on FAD as a cofactor.

It localises to the mitochondrion outer membrane. The catalysed reaction is L-kynurenine + NADPH + O2 + H(+) = 3-hydroxy-L-kynurenine + NADP(+) + H2O. It functions in the pathway cofactor biosynthesis; NAD(+) biosynthesis; quinolinate from L-kynurenine: step 1/3. Catalyzes the hydroxylation of L-kynurenine (L-Kyn) to form 3-hydroxy-L-kynurenine (L-3OHKyn). Required for synthesis of quinolinic acid. The chain is Kynurenine 3-monooxygenase (bna4) from Aspergillus terreus (strain NIH 2624 / FGSC A1156).